The primary structure comprises 693 residues: Elongation factor G (693 aa).

The tr-type G domain occupies 8-282; the sequence is EKTRNIGIMA…AVIDYLPSPL (275 aa). GTP contacts are provided by residues 17-24, 81-85, and 135-138; these read AHVDAGKT, DTPGH, and NKMD.

It belongs to the TRAFAC class translation factor GTPase superfamily. Classic translation factor GTPase family. EF-G/EF-2 subfamily.

It is found in the cytoplasm. Catalyzes the GTP-dependent ribosomal translocation step during translation elongation. During this step, the ribosome changes from the pre-translocational (PRE) to the post-translocational (POST) state as the newly formed A-site-bound peptidyl-tRNA and P-site-bound deacylated tRNA move to the P and E sites, respectively. Catalyzes the coordinated movement of the two tRNA molecules, the mRNA and conformational changes in the ribosome. In Streptococcus suis (strain 05ZYH33), this protein is Elongation factor G.